A 1791-amino-acid polypeptide reads, in one-letter code: Sodium channel protein type 11 subunit alpha (1791 aa).

Over 1–126 the chain is Cytoplasmic; the sequence is MDDRCYPVIF…SIRSLAIRVS (126 aa). Residues 115 to 408 form an I repeat; the sequence is FNSIRSLAIR…VTMAYEEQNK (294 aa). Residues 127-148 form a helical membrane-spanning segment; it reads VHSLFSMFIIGTVIINCVFMAT. Over 149–156 the chain is Extracellular; it reads GPAKNSNS. Residues 157 to 180 traverse the membrane as a helical segment; it reads NNTDIAECVFTGIYIFEALIKILA. The Cytoplasmic portion of the chain corresponds to 181 to 192; sequence RGFILDEFSFLR. Residues 193 to 212 form a helical membrane-spanning segment; it reads DPWNWLDSIVIGIAIVSYIP. Residues 213–219 lie on the Extracellular side of the membrane; that stretch reads GITIKLL. Residues 220 to 239 form a helical; Voltage-sensor membrane-spanning segment; that stretch reads PLRTFRVFRALKAISVVSRL. The Cytoplasmic portion of the chain corresponds to 240 to 255; sequence KVIVGALLRSVKKLVN. The helical transmembrane segment at 256–269 threads the bilayer; it reads VIILTFFCLSIFAL. Residues 270-344 lie on the Extracellular side of the membrane; it reads VGQQLFMGSL…PDYNYTNFDN (75 aa). C283 and C322 form a disulfide bridge. N-linked (GlcNAc...) asparagine glycans are attached at residues N290 and N338. The pore-forming intramembrane region spans 345–369; that stretch reads FGWSFLAMFRLMTQDSWEKLYQQTL. The Extracellular segment spans residues 370–376; sequence RTTGLYS. A helical membrane pass occupies residues 377 to 402; that stretch reads VFFFIVVIFLGSFYLINLTLAVVTMA. The Cytoplasmic portion of the chain corresponds to 403 to 572; the sequence is YEEQNKNVAA…WLCVKKVLRT (170 aa). The stretch at 559–833 is one II repeat; sequence CCPQWLCVKK…EGEARKTKVQ (275 aa). The helical transmembrane segment at 573–596 threads the bilayer; that stretch reads VMTDPFTELAITICIIINTVFLAM. At 597-607 the chain is on the extracellular side; it reads EHHKMEASFEK. The chain crosses the membrane as a helical span at residues 608-631; it reads MLNIGNLVFTSIFIAEMCLKIIAL. The Cytoplasmic portion of the chain corresponds to 632–639; the sequence is DPYHYFRR. A helical transmembrane segment spans residues 640–659; the sequence is GWNIFDSIVALLSFADVMNC. Residues 660–667 are Extracellular-facing; sequence VLQKRSWP. Residues 668-687 form a helical; Voltage-sensor membrane-spanning segment; sequence FLRSFRVLRVFKLAKSWPTL. The Cytoplasmic segment spans residues 688–702; the sequence is NTLIKIIGNSVGALG. Residues 703-725 form a helical membrane-spanning segment; sequence SLTVVLVIVIFIFSVVGMQLFGR. Over 726-753 the chain is Extracellular; that stretch reads SFNSQKSPKLCNPTGPTVSCLRHWHMGD. Positions 754-774 form an intramembrane region, pore-forming; the sequence is FWHSFLVVFRILCGEWIENMW. Over 775 to 785 the chain is Extracellular; it reads ECMQEANASSS. A disulfide bridge links C776 with C787. N-linked (GlcNAc...) asparagine glycosylation occurs at N781. A helical transmembrane segment spans residues 786–811; the sequence is LCVIVFILITVIGKLVVLNLFIALLL. At 812 to 1051 the chain is on the cytoplasmic side; it reads NSFSNEERNG…WWNLRKTCYQ (240 aa). The III repeat unit spans residues 1044–1339; that stretch reads NLRKTCYQIV…KKYYNAMKKL (296 aa). Residues 1052-1074 form a helical membrane-spanning segment; sequence IVKHSWFESFIIFVILLSSGALI. Over 1075 to 1088 the chain is Extracellular; that stretch reads FEDVHLENQPKIQE. A helical transmembrane segment spans residues 1089 to 1114; it reads LLNCTDIIFTHIFILEMVLKWVAFGF. The Cytoplasmic portion of the chain corresponds to 1115–1120; it reads GKYFTS. Residues 1121 to 1138 form a helical membrane-spanning segment; the sequence is AWCCLDFIIVIVSVTTLI. A topological domain (extracellular) is located at residue N1139. The helical; Voltage-sensor transmembrane segment at 1140–1161 threads the bilayer; sequence LMELKSFRTLRALRPLRALSQF. Residues 1162–1180 are Cytoplasmic-facing; that stretch reads EGMKVVVNALIGAIPAILN. Residues 1181–1202 form a helical membrane-spanning segment; the sequence is VLLVCLIFWLVFCILGVYFFSG. Residues 1203–1243 are Extracellular-facing; it reads KFGKCINGTDSVINYTIITNKSQCESGNFSWINQKVNFDNV. N1209, N1216, N1222, and N1230 each carry an N-linked (GlcNAc...) asparagine glycan. Residues 1244-1265 constitute an intramembrane region (pore-forming); it reads GNAYLALLQVATFKGWMDIIYA. At 1266–1281 the chain is on the extracellular side; it reads AVDSTEKEQQPEFESN. A helical membrane pass occupies residues 1282–1308; it reads SLGYIYFVVFIIFGSFFTLNLFIGVII. Over 1309-1361 the chain is Cytoplasmic; sequence DNFNQQQKKLGGQDIFMTEEQKKYYNAMKKLGSKKPQKPIPRPLNKCQGLVFD. Residues 1348-1639 form an IV repeat; the sequence is IPRPLNKCQG…WEKFDPEATQ (292 aa). Residues 1362 to 1385 form a helical membrane-spanning segment; the sequence is IVTSQIFDIIIISLIILNMISMMA. The Extracellular portion of the chain corresponds to 1386–1396; that stretch reads ESYNQPKAMKS. A helical membrane pass occupies residues 1397 to 1420; the sequence is ILDHLNWVFVVIFTLECLIKIFAL. Residues 1421-1426 lie on the Cytoplasmic side of the membrane; that stretch reads RQYYFT. Residues 1427-1450 traverse the membrane as a helical segment; sequence NGWNLFDCVVVLLSIVSTMISTLE. Residues 1451 to 1461 lie on the Extracellular side of the membrane; the sequence is NQEHIPFPPTL. The helical; Voltage-sensor transmembrane segment at 1462–1484 threads the bilayer; it reads FRIVRLARIGRILRLVRAARGIR. Residues 1485-1499 are Cytoplasmic-facing; that stretch reads TLLFALMMSLPSLFN. Residues 1500 to 1522 form a helical membrane-spanning segment; the sequence is IGLLLFLIMFIYAILGMNWFSKV. Topologically, residues 1523-1536 are extracellular; it reads NPESGIDDIFNFKT. The pore-forming intramembrane region spans 1537–1559; sequence FASSMLCLFQISTSAGWDSLLSP. Topologically, residues 1560–1579 are extracellular; that stretch reads MLRSKESCNSSSENCHLPGI. Residue N1568 is glycosylated (N-linked (GlcNAc...) asparagine). The helical transmembrane segment at 1580-1604 threads the bilayer; sequence ATSYFVSYIIISFLIVVNMYIAVIL. Over 1605-1791 the chain is Cytoplasmic; it reads ENFNTATEES…GVAKGKVHCD (187 aa).

The protein belongs to the sodium channel (TC 1.A.1.10) family. Nav1.9/SCN11A subfamily. The voltage-resistant sodium channel consists of an ion conducting pore forming alpha-subunit regulated by one or more auxiliary subunits SCN1B, SCN2B and SCN3B. In terms of tissue distribution, expressed in the dorsal root ganglia and trigeminal ganglia, olfactory bulb, hippocampus, cerebellar cortex, spinal cord, spleen, small intestine and placenta.

It localises to the cell membrane. It catalyses the reaction Na(+)(in) = Na(+)(out). Its activity is regulated as follows. Activity is not sensitive to inhibition by tetrodotoxin. Functionally, sodium channel mediating the voltage-dependent sodium ion permeability of excitable membranes. Assuming opened or closed conformations in response to the voltage difference across the membrane, the protein forms a sodium-selective channel through which sodium ions may pass in accordance with their electrochemical gradient. Involved in membrane depolarization during action potential in nociceptors which function as key relay stations for the electrical transmission of pain signals from the periphery to the central nervous system. Also involved in rapid BDNF-evoked neuronal depolarization. The polypeptide is Sodium channel protein type 11 subunit alpha (Homo sapiens (Human)).